We begin with the raw amino-acid sequence, 231 residues long: Flagellar L-ring protein (231 aa).

The first 18 residues, M1–G18, serve as a signal peptide directing secretion. A lipid anchor (N-palmitoyl cysteine) is attached at C19. C19 carries the S-diacylglycerol cysteine lipid modification.

Belongs to the FlgH family. As to quaternary structure, the basal body constitutes a major portion of the flagellar organelle and consists of four rings (L,P,S, and M) mounted on a central rod.

It localises to the cell outer membrane. It is found in the bacterial flagellum basal body. In terms of biological role, assembles around the rod to form the L-ring and probably protects the motor/basal body from shearing forces during rotation. This chain is Flagellar L-ring protein, found in Pseudomonas entomophila (strain L48).